A 627-amino-acid polypeptide reads, in one-letter code: Muscarinic acetylcholine receptor gar-2 (627 aa).

The Extracellular segment spans residues 1-9 (MAVASVLLA). A helical transmembrane segment spans residues 10–30 (LFMLFLSIVTVIGNLAVLLSY). Residues 31–41 (YLDKNIRQPTN) lie on the Cytoplasmic side of the membrane. Residues 42–62 (YFIFSLAISDLLIGLEGIPVY) form a helical membrane-spanning segment. Topologically, residues 63 to 81 (TAFYLNNNEWIWGDVLCDL) are extracellular. Residues Cys-79 and Cys-160 are joined by a disulfide bond. Residues 82–102 (WLSIDYIVCLASIYTVLGITV) form a helical membrane-spanning segment. Topologically, residues 103–122 (DRYYSVKKPATYRNWRTPGR) are cytoplasmic. The chain crosses the membrane as a helical span at residues 123–143 (VVLIIIFIWLVPSILFSVSIF). Topologically, residues 144–172 (GYGTFTGTGRILKETECYVQFMTNPYLNM) are extracellular. Residues 173–193 (GMYISYYWTTLFVMLYLYWGI) traverse the membrane as a helical segment. At 194-549 (YRAAKKLALK…ENRARKALRT (356 aa)) the chain is on the cytoplasmic side. Disordered regions lie at residues 222 to 266 (VSVR…VGTP), 423 to 442 (REDENKNEEEKQKNGLENGG), and 449 to 475 (ANDEQQPSTSKESEQKEEMTPENHDPN). The span at 231 to 264 (NSSSDSPNDTSNSSKCFRTAPPTTTVQTTQTNVG) shows a compositional bias: low complexity. Basic and acidic residues predominate over residues 459-475 (KESEQKEEMTPENHDPN). Residues 550–570 (ITFILGSFIILWTPFYVLATI) form a helical membrane-spanning segment. At 571 to 586 (YGFCETCKASPSFNTL) the chain is on the extracellular side. The helical transmembrane segment at 587–609 (YTISYYLCYMNSPLNPFCYAMAN) threads the bilayer. Over 610–627 (QQFKKTLTRIFKGDFRRV) the chain is Cytoplasmic.

This sequence belongs to the G-protein coupled receptor 1 family. Muscarinic acetylcholine receptor subfamily. Expressed in putative sensory neurons, many cells of the ventral cord and in the HSN motor neurons. Expressed in some cholinergic motor neurons and GABAergic motor neurons, which are the two major types of ventral cord motor neurons.

Its subcellular location is the cell membrane. It localises to the cell projection. The protein resides in the axon. In terms of biological role, the muscarinic acetylcholine receptor mediates various cellular responses, including inhibition of adenylate cyclase, breakdown of phosphoinositides and modulation of potassium channels through the action of G proteins. Primary transducing effect is Pi turnover. Regulates the activity of ventral cord motor neurons. Couples to the G(o)-alpha G-protein subunit goa-1 to negatively regulate cholinergic receptor activity in the presence of high levels of the neurotransmitter acetylcholine in ventral cord motor neurons. As acetylcholine depolarizes body wall muscles, modulation of acetylcholine levels most likely results in the control locomotory behavior and egg-laying. The protein is Muscarinic acetylcholine receptor gar-2 of Caenorhabditis elegans.